Here is a 530-residue protein sequence, read N- to C-terminus: Fusaric acid resistance protein FusA (530 aa).

The N-terminal stretch at 1 to 23 is a signal peptide; that stretch reads MQSPATKGTLALAVLAVSLIMAG. The N-palmitoyl cysteine moiety is linked to residue Cys24. Residue Cys24 is the site of S-diacylglycerol cysteine attachment. Disordered regions lie at residues 375–442 and 476–530; these read NAGV…RQRA and GVET…PAAR. Composition is skewed to low complexity over residues 421 to 430 and 494 to 530; these read RPQLPAVARR and AAGA…PAAR.

Belongs to the outer membrane factor (OMF) (TC 1.B.17) family.

It localises to the cell membrane. Its function is as follows. Involved in the resistance (detoxification) of the fungal toxin fusaric acid. This chain is Fusaric acid resistance protein FusA (fusA), found in Burkholderia cepacia (Pseudomonas cepacia).